The sequence spans 302 residues: Homoserine kinase (302 aa).

90–100 (KPGSGLGSSSA) provides a ligand contact to ATP.

The protein belongs to the GHMP kinase family. Homoserine kinase subfamily.

It localises to the cytoplasm. It catalyses the reaction L-homoserine + ATP = O-phospho-L-homoserine + ADP + H(+). It functions in the pathway amino-acid biosynthesis; L-threonine biosynthesis; L-threonine from L-aspartate: step 4/5. In terms of biological role, catalyzes the ATP-dependent phosphorylation of L-homoserine to L-homoserine phosphate. The chain is Homoserine kinase from Methanococcus vannielii (strain ATCC 35089 / DSM 1224 / JCM 13029 / OCM 148 / SB).